A 223-amino-acid polypeptide reads, in one-letter code: Deoxyribose-phosphate aldolase (223 aa).

Residue aspartate 91 is the Proton donor/acceptor of the active site. Lysine 153 acts as the Schiff-base intermediate with acetaldehyde in catalysis. Lysine 182 serves as the catalytic Proton donor/acceptor.

Belongs to the DeoC/FbaB aldolase family. DeoC type 1 subfamily.

Its subcellular location is the cytoplasm. It catalyses the reaction 2-deoxy-D-ribose 5-phosphate = D-glyceraldehyde 3-phosphate + acetaldehyde. It functions in the pathway carbohydrate degradation; 2-deoxy-D-ribose 1-phosphate degradation; D-glyceraldehyde 3-phosphate and acetaldehyde from 2-deoxy-alpha-D-ribose 1-phosphate: step 2/2. Catalyzes a reversible aldol reaction between acetaldehyde and D-glyceraldehyde 3-phosphate to generate 2-deoxy-D-ribose 5-phosphate. In Streptococcus agalactiae serotype V (strain ATCC BAA-611 / 2603 V/R), this protein is Deoxyribose-phosphate aldolase.